Here is a 345-residue protein sequence, read N- to C-terminus: N-acetyl-gamma-glutamyl-phosphate reductase (345 aa).

The active site involves Cys-142.

The protein belongs to the NAGSA dehydrogenase family. Type 1 subfamily.

The protein localises to the cytoplasm. The enzyme catalyses N-acetyl-L-glutamate 5-semialdehyde + phosphate + NADP(+) = N-acetyl-L-glutamyl 5-phosphate + NADPH + H(+). Its pathway is amino-acid biosynthesis; L-arginine biosynthesis; N(2)-acetyl-L-ornithine from L-glutamate: step 3/4. Catalyzes the NADPH-dependent reduction of N-acetyl-5-glutamyl phosphate to yield N-acetyl-L-glutamate 5-semialdehyde. This Thermus thermophilus (strain ATCC BAA-163 / DSM 7039 / HB27) protein is N-acetyl-gamma-glutamyl-phosphate reductase.